We begin with the raw amino-acid sequence, 505 residues long: Beta-agarase (505 aa).

An N-terminal signal peptide occupies residues 1–23 (MLKVIPWLLVTSSLVAIPTYIHA). Glutamate 200 functions as the Proton donor in the catalytic mechanism. Glutamate 322 serves as the catalytic Nucleophile.

The protein belongs to the glycosyl hydrolase 86 family.

Its subcellular location is the secreted. The enzyme catalyses Hydrolysis of (1-&gt;4)-beta-D-galactosidic linkages in agarose, giving the tetramer as the predominant product.. Functionally, hydrolase that cleaves agar at the (1-&gt;4) linkage, producing tetrameric saccharide molecules. Is specific for agar and agarose and does not digest alginate or carrageenan. The polypeptide is Beta-agarase (Pseudoalteromonas atlantica (Alteromonas atlantica)).